The following is a 192-amino-acid chain: Ion-translocating oxidoreductase complex subunit B (192 aa).

The interval 1–26 (MNAIWIAVAAVSLLGLAFGAILGYAS) is hydrophobic. The 60-residue stretch at 32-91 (EDDPVVEKIDEILPQSQCGQCGYPGCRPYAEAISCNGEKINRCAPGGEAVMLKIAELLNV) folds into the 4Fe-4S domain. The [4Fe-4S] cluster site is built by cysteine 49, cysteine 52, cysteine 57, cysteine 74, cysteine 117, cysteine 120, cysteine 123, cysteine 127, cysteine 147, cysteine 150, cysteine 153, and cysteine 157. 4Fe-4S ferredoxin-type domains follow at residues 108–137 (MVAVIDENNCIGCTKCIQACPVDAIVGATR) and 138–167 (AMHTVMSDLCTGCNLCVDPCPTHCISLQPV).

The protein belongs to the 4Fe4S bacterial-type ferredoxin family. RnfB subfamily. The complex is composed of six subunits: RsxA, RsxB, RsxC, RsxD, RsxE and RsxG. It depends on [4Fe-4S] cluster as a cofactor.

It is found in the cell inner membrane. Functionally, part of a membrane-bound complex that couples electron transfer with translocation of ions across the membrane. Required to maintain the reduced state of SoxR. In Shigella dysenteriae serotype 1 (strain Sd197), this protein is Ion-translocating oxidoreductase complex subunit B.